Consider the following 177-residue polypeptide: Probable phospholipid hydroperoxide glutathione peroxidase (177 aa).

The active site involves Cys-42.

The protein belongs to the glutathione peroxidase family.

The protein localises to the cytoplasm. The catalysed reaction is a hydroperoxy polyunsaturated fatty acid + 2 glutathione = a hydroxy polyunsaturated fatty acid + glutathione disulfide + H2O. Its function is as follows. Protects cells and enzymes from oxidative damage, by catalyzing the reduction of hydrogen peroxide, lipid peroxides and organic hydroperoxide, by glutathione. The polypeptide is Probable phospholipid hydroperoxide glutathione peroxidase (Encephalitozoon cuniculi (strain GB-M1) (Microsporidian parasite)).